The primary structure comprises 329 residues: Endo-beta-N-acetylglucosaminidase F3 (329 aa).

A signal peptide (or 40, or 41) is located at residues 1–39; the sequence is MKKIFFAQCSILLLMLGSCSKMTEDMTPESVNKEASVKS. The GH18 domain maps to 48-329; it reads GVCIAYYITD…ANAVRDAVKN (282 aa). Residue Thr88 is glycosylated (O-linked (Man...) threonine). Glu167 functions as the Proton donor in the catalytic mechanism.

The protein belongs to the glycosyl hydrolase 18 family. Monomer. Carbohydrate at Thr-88 consists of (2-OMe)Man1-4GlcNAcU1-4GlcU1-4Glc1-4(2-OMe)GlcU1-4[(2-OMe)Rham1-2]Man.

It is found in the secreted. The enzyme catalyses an N(4)-(oligosaccharide-(1-&gt;3)-[oligosaccharide-(1-&gt;6)]-beta-D-Man-(1-&gt;4)-beta-D-GlcNAc-(1-&gt;4)-alpha-D-GlcNAc)-L-asparaginyl-[protein] + H2O = an oligosaccharide-(1-&gt;3)-[oligosaccharide-(1-&gt;6)]-beta-D-Man-(1-&gt;4)-D-GlcNAc + N(4)-(N-acetyl-beta-D-glucosaminyl)-L-asparaginyl-[protein]. In terms of biological role, endohydrolysis of the di-N-acetylchitobiosyl unit in high-mannose glycopeptides and glycoproteins. Hydrolyzes bi- and triantennary glycans. The presence of a core-bound fucose greatly augments endo F3 activity on biantennary and, presumably, triantennary oligosaccharides. The protein is Endo-beta-N-acetylglucosaminidase F3 (endOF3) of Elizabethkingia meningoseptica (Chryseobacterium meningosepticum).